A 252-amino-acid polypeptide reads, in one-letter code: Geranylgeranylglyceryl phosphate synthase (252 aa).

Residues Asp25 and Ser54 each contribute to the Mg(2+) site. Sn-glycerol 1-phosphate-binding positions include 174-180, 205-206, and 227-228; these read FMDAGSG, GG, and GN.

It belongs to the GGGP/HepGP synthase family. Group II subfamily. In terms of assembly, homohexamer. Requires Mg(2+) as cofactor.

It carries out the reaction sn-glycerol 1-phosphate + (2E,6E,10E)-geranylgeranyl diphosphate = sn-3-O-(geranylgeranyl)glycerol 1-phosphate + diphosphate. In terms of biological role, prenyltransferase that catalyzes the transfer of the geranylgeranyl moiety of geranylgeranyl diphosphate (GGPP) to the C3 hydroxyl of sn-glycerol-1-phosphate (G1P). The chain is Geranylgeranylglyceryl phosphate synthase from Chitinophaga pinensis (strain ATCC 43595 / DSM 2588 / LMG 13176 / NBRC 15968 / NCIMB 11800 / UQM 2034).